We begin with the raw amino-acid sequence, 65 residues long: Large ribosomal subunit protein bL35 (65 aa).

It belongs to the bacterial ribosomal protein bL35 family.

The chain is Large ribosomal subunit protein bL35 from Proteus mirabilis (strain HI4320).